Reading from the N-terminus, the 690-residue chain is Protein MODIFIED TRANSPORT TO THE VACUOLE 1 (690 aa).

Residues 20-150 (VTSDEDKVAP…PESINRRIEG (131 aa)) form the VHS domain. Disordered regions lie at residues 228 to 258 (DGNY…SVRV) and 518 to 551 (FSID…HQAP). The span at 243 to 257 (GHASGEASESSASVR) shows a compositional bias: low complexity. Residues 520 to 536 (IDENNSNQKGSSSSTLP) are compositionally biased toward polar residues.

Binds to clathrin heavy chain. In terms of tissue distribution, expressed in inflorescence stems, stigmas, roots, roots meristems, embryos, and floral and leaf vasculatures, but absent from the floral abscission zone.

It is found in the golgi apparatus. The protein localises to the trans-Golgi network. The protein resides in the cytoplasmic vesicle. Its subcellular location is the clathrin-coated vesicle. Functionally, mediates clathrin-dependent trafficking of vacuolar cargo from the trans-Golgi network (TGN). Promotes plant growth. The chain is Protein MODIFIED TRANSPORT TO THE VACUOLE 1 from Arabidopsis thaliana (Mouse-ear cress).